The following is a 601-amino-acid chain: A-type ATP synthase subunit A (601 aa).

235–242 contributes to the ATP binding site; the sequence is GGFGTGKT.

This sequence belongs to the ATPase alpha/beta chains family. Has multiple subunits with at least A(3), B(3), C, D, E, F, H, I and proteolipid K(x).

The protein localises to the cell membrane. It catalyses the reaction ATP + H2O + 4 H(+)(in) = ADP + phosphate + 5 H(+)(out). Functionally, component of the A-type ATP synthase that produces ATP from ADP in the presence of a proton gradient across the membrane. The A chain is the catalytic subunit. In Thermofilum pendens (strain DSM 2475 / Hrk 5), this protein is A-type ATP synthase subunit A.